We begin with the raw amino-acid sequence, 287 residues long: Damage-control phosphatase PH1575 (287 aa).

The short motif at 7-10 (CLTC) is the Subfamily I CxxC motif element. 3 residues coordinate Mn(2+): aspartate 156, asparagine 157, and aspartate 191. The Subfamily I GNFE motif signature appears at 243-246 (GNFE). Positions 263–264 (KC) match the Subfamily I KC motif motif.

This sequence belongs to the damage-control phosphatase family. Nucleotides phosphatase I subfamily. The cofactor is Mn(2+). Requires Ni(2+) as cofactor. [2Fe-2S] cluster is required as a cofactor.

With respect to regulation, activity is strongly promoted by Co(2+), Ni(2+), Mg(2+), Mn(2+), Ca(2+), Zn(2+) and Cu(2+). Activity is inhibited by EDTA. Metal-dependent phosphatase with probable damage-control functions. Shows phosphatase activity against p-nitrophenyl phosphate (pNPP), but natural substrates have not been identified yet. Low phosphatase activity against 8-oxo nucleotides suggests that it could hydrolyze oxidatively damaged purine nucleotides or their biosynthetic intermediates. This chain is Damage-control phosphatase PH1575, found in Pyrococcus horikoshii (strain ATCC 700860 / DSM 12428 / JCM 9974 / NBRC 100139 / OT-3).